A 287-amino-acid chain; its full sequence is 4-diphosphocytidyl-2-C-methyl-D-erythritol kinase (287 aa).

K10 is an active-site residue. ATP is bound at residue 92–102; that stretch reads PLAAGLAGGSA. The active site involves D134.

This sequence belongs to the GHMP kinase family. IspE subfamily.

It catalyses the reaction 4-CDP-2-C-methyl-D-erythritol + ATP = 4-CDP-2-C-methyl-D-erythritol 2-phosphate + ADP + H(+). It participates in isoprenoid biosynthesis; isopentenyl diphosphate biosynthesis via DXP pathway; isopentenyl diphosphate from 1-deoxy-D-xylulose 5-phosphate: step 3/6. Catalyzes the phosphorylation of the position 2 hydroxy group of 4-diphosphocytidyl-2C-methyl-D-erythritol. This chain is 4-diphosphocytidyl-2-C-methyl-D-erythritol kinase, found in Caldanaerobacter subterraneus subsp. tengcongensis (strain DSM 15242 / JCM 11007 / NBRC 100824 / MB4) (Thermoanaerobacter tengcongensis).